The primary structure comprises 452 residues: MSLTTVILAAGKGTRMRSALPKVLHKVAGKTMVQHVIDNAKALGATTTNLVYGHGGELLQQQLANNNVNWVLQAEQLGTGHAVAQANSHVNDDDTVLILYGDVPLTKQSTLERLLAATPKHGLAVLTVNLANPNGYGRMLRVDGKLVGIVEQKDASPEQLLISEVNTGIMAVNGRLLKSWLGNLSNNNAQGEYYLTDIVAMAHSEGVEITSAQPDHPMEVEGANNRIQLAGLERAYQAWQAQELMLNGATLADPARIDVRGTVTTGEDVLIDINVIFEGKVTIGHNVEIGPNCVLKNCSIGDNVIIKANTLIEDATVAAKCTLGPYARLRPGAIMEEDSHVGNFVEMKKTRLGKGSKANHLSYLGDAEIGEKVNIGAGTITCNYDGVNKAKTIIGNNAFIGSNSSLVAPVNIGAMATIGAGSVITNTVADEQLAIARGKQRNLDGWKRPVKK.

The segment at 1–226 is pyrophosphorylase; sequence MSLTTVILAA…PMEVEGANNR (226 aa). UDP-N-acetyl-alpha-D-glucosamine-binding positions include 8 to 11, lysine 22, glutamine 73, 78 to 79, 100 to 102, glycine 137, glutamate 151, asparagine 166, and asparagine 224; these read LAAG, GT, and YGD. Residue aspartate 102 participates in Mg(2+) binding. Asparagine 224 contributes to the Mg(2+) binding site. Positions 227 to 247 are linker; the sequence is IQLAGLERAYQAWQAQELMLN. Residues 248-452 form an N-acetyltransferase region; that stretch reads GATLADPARI…LDGWKRPVKK (205 aa). Residues arginine 330 and lysine 348 each coordinate UDP-N-acetyl-alpha-D-glucosamine. Histidine 360 acts as the Proton acceptor in catalysis. UDP-N-acetyl-alpha-D-glucosamine is bound by residues tyrosine 363 and asparagine 374. Acetyl-CoA is bound by residues alanine 377, 383–384, serine 402, alanine 420, and arginine 437; that span reads NY.

It in the N-terminal section; belongs to the N-acetylglucosamine-1-phosphate uridyltransferase family. In the C-terminal section; belongs to the transferase hexapeptide repeat family. Homotrimer. Mg(2+) is required as a cofactor.

The protein localises to the cytoplasm. The enzyme catalyses alpha-D-glucosamine 1-phosphate + acetyl-CoA = N-acetyl-alpha-D-glucosamine 1-phosphate + CoA + H(+). It catalyses the reaction N-acetyl-alpha-D-glucosamine 1-phosphate + UTP + H(+) = UDP-N-acetyl-alpha-D-glucosamine + diphosphate. It functions in the pathway nucleotide-sugar biosynthesis; UDP-N-acetyl-alpha-D-glucosamine biosynthesis; N-acetyl-alpha-D-glucosamine 1-phosphate from alpha-D-glucosamine 6-phosphate (route II): step 2/2. The protein operates within nucleotide-sugar biosynthesis; UDP-N-acetyl-alpha-D-glucosamine biosynthesis; UDP-N-acetyl-alpha-D-glucosamine from N-acetyl-alpha-D-glucosamine 1-phosphate: step 1/1. It participates in bacterial outer membrane biogenesis; LPS lipid A biosynthesis. Catalyzes the last two sequential reactions in the de novo biosynthetic pathway for UDP-N-acetylglucosamine (UDP-GlcNAc). The C-terminal domain catalyzes the transfer of acetyl group from acetyl coenzyme A to glucosamine-1-phosphate (GlcN-1-P) to produce N-acetylglucosamine-1-phosphate (GlcNAc-1-P), which is converted into UDP-GlcNAc by the transfer of uridine 5-monophosphate (from uridine 5-triphosphate), a reaction catalyzed by the N-terminal domain. This Pseudoalteromonas translucida (strain TAC 125) protein is Bifunctional protein GlmU.